Consider the following 448-residue polypeptide: Adenylosuccinate synthetase (448 aa).

GTP is bound by residues 36-42 (GDEGKGK) and 64-66 (GHT). The Proton acceptor role is filled by Asp-37. Asp-37 and Gly-64 together coordinate Mg(2+). Residues 37–40 (DEGK), 62–65 (NAGH), Thr-154, Arg-168, Asn-246, Thr-261, and Arg-325 each bind IMP. His-65 (proton donor) is an active-site residue. 321-327 (VTTKRKR) contacts substrate. GTP-binding positions include Arg-327, 353–355 (KLD), and 436–438 (GVG).

This sequence belongs to the adenylosuccinate synthetase family. In terms of assembly, homodimer. The cofactor is Mg(2+).

Its subcellular location is the cytoplasm. It catalyses the reaction IMP + L-aspartate + GTP = N(6)-(1,2-dicarboxyethyl)-AMP + GDP + phosphate + 2 H(+). It functions in the pathway purine metabolism; AMP biosynthesis via de novo pathway; AMP from IMP: step 1/2. Plays an important role in the de novo pathway and in the salvage pathway of purine nucleotide biosynthesis. Catalyzes the first committed step in the biosynthesis of AMP from IMP. The polypeptide is Adenylosuccinate synthetase (Drosophila ananassae (Fruit fly)).